A 434-amino-acid chain; its full sequence is Enolase (434 aa).

Glutamine 165 is a binding site for (2R)-2-phosphoglycerate. Glutamate 207 acts as the Proton donor in catalysis. Mg(2+) is bound by residues aspartate 244, glutamate 291, and aspartate 318. Positions 343, 372, 373, and 394 each coordinate (2R)-2-phosphoglycerate. Lysine 343 acts as the Proton acceptor in catalysis.

The protein belongs to the enolase family. The cofactor is Mg(2+).

It localises to the cytoplasm. The protein localises to the secreted. Its subcellular location is the cell surface. It catalyses the reaction (2R)-2-phosphoglycerate = phosphoenolpyruvate + H2O. The protein operates within carbohydrate degradation; glycolysis; pyruvate from D-glyceraldehyde 3-phosphate: step 4/5. Catalyzes the reversible conversion of 2-phosphoglycerate (2-PG) into phosphoenolpyruvate (PEP). It is essential for the degradation of carbohydrates via glycolysis. The chain is Enolase from Staphylococcus epidermidis (strain ATCC 35984 / DSM 28319 / BCRC 17069 / CCUG 31568 / BM 3577 / RP62A).